A 693-amino-acid polypeptide reads, in one-letter code: TGF-beta-activated kinase 1 and MAP3K7-binding protein 2 (693 aa).

In terms of domain architecture, CUE spans 8–51 (IDFQVLHDLRQKFPEVPEVVVSRCMLQNNNNLDACCAVLSQEST). The interval 91-130 (GREGSRMNGSRTLTHSISDGQLQGGQSNSELFQQEPQTAP) is disordered. The span at 97 to 130 (MNGSRTLTHSISDGQLQGGQSNSELFQQEPQTAP) shows a compositional bias: polar residues. An Asymmetric dimethylarginine modification is found at arginine 173. The disordered stretch occupies residues 219 to 310 (ITTPGGTTRQ…SGSSQSSAHS (92 aa)). Low complexity predominate over residues 220–231 (TTPGGTTRQTQQ). Residues 232–282 (HSGWVSQFNPMNPQQVYQPSQPGPWTTCPASNPLSHTSSQQPNQQGHQTSH) show a composition bias toward polar residues. Residues 286-310 (PISSPTTSQPPTIHSSGSSQSSAHS) are compositionally biased toward low complexity. Lysine 329 is covalently cross-linked (Glycyl lysine isopeptide (Lys-Gly) (interchain with G-Cter in SUMO)). Residues 330–381 (LEPPQRNNSSKLRSSGPRTSSTSSSVNSQTLNRNQPTVYIAASPPNTDELMS) are disordered. A compositionally biased stretch (low complexity) spans 343 to 359 (SSGPRTSSTSSSVNSQT). Phosphoserine is present on residues serine 372, serine 450, serine 482, and serine 524. The stretch at 532 to 619 (YTQALLVHQK…TKEIDLFQAR (88 aa)) forms a coiled coil. Residue lysine 562 forms a Glycyl lysine isopeptide (Lys-Gly) (interchain with G-Cter in SUMO) linkage. Serine 582 bears the Phosphoserine mark. A Glycyl lysine isopeptide (Lys-Gly) (interchain with G-Cter in ubiquitin) cross-link involves residue lysine 611. Residues 642 to 663 (PPKPKDQRSIIKTPKTQDTEDD) are disordered. The segment at 663–693 (DEGAQWNCTACTFLNHPALIRCEQCEMPRHF) adopts a RanBP2-type zinc-finger fold. At cysteine 673 the chain carries (Microbial infection) S-methylcysteine. The interaction with polyubiquitin stretch occupies residues 675-685 (FLNHPALIRCE).

Interacts with MAP3K7 and TRAF6. Identified in the TRIKA2 complex composed of MAP3K7, TAB1 and TAB2. Binds 'Lys-63'-linked polyubiquitin chains. Interacts with NCOR1 and HDAC3 to form a ternary complex. Interacts (via C-terminal) with NUMBL (via PTB domain). Interacts (via the C-terminus) with DYNC2I2 (via WD domains). Interacts with RBCK1. Interacts with TRIM5. Interacts with TRIM38 (via B30.2/SPRY domain), leading to its translocation to lysosomes and degradation. Interacts with ASB1; this interaction promotes TAB2 stability. Degraded in a lysosome-dependent manner following interaction with TRIM38. In terms of processing, SUMOylated by TRIM60; leading to inhibition of MAPK/NF-kappaB activation and the innate immune response. Post-translationally, ubiquitinated; following IL1 stimulation or TRAF6 overexpression. Ubiquitination involves RBCK1 leading to proteasomal degradation. Ubiquitinated at Lys-611 by TRIM45 leading to proteasomal degradation. Phosphorylated. In terms of processing, (Microbial infection) Methylated at Cys-673 by enteropathogenic E.coli protein NleE or S.flexneri protein OspZ: methylation disrupts zinc-binding and ability to bind 'Lys-63'-linked ubiquitin, leading to NF-kappa-B inactivation. Widely expressed. In the embryo, expressed in the ventricular trabeculae, endothelial cells of the conotruncal cushions of the outflow tract and in the endothelial cells lining the developing aortic valves.

The protein resides in the membrane. It is found in the endosome membrane. Its subcellular location is the lysosome membrane. It localises to the cytoplasm. The protein localises to the cytosol. Its function is as follows. Adapter required to activate the JNK and NF-kappa-B signaling pathways through the specific recognition of 'Lys-63'-linked polyubiquitin chains by its RanBP2-type zinc finger (NZF). Acts as an adapter linking MAP3K7/TAK1 and TRAF6 to 'Lys-63'-linked polyubiquitin chains. The RanBP2-type zinc finger (NZF) specifically recognizes Lys-63'-linked polyubiquitin chains unanchored or anchored to the substrate proteins such as RIPK1/RIP1 and RIPK2: this acts as a scaffold to organize a large signaling complex to promote autophosphorylation of MAP3K7/TAK1, and subsequent activation of I-kappa-B-kinase (IKK) core complex by MAP3K7/TAK1. Also recognizes and binds Lys-63'-linked polyubiquitin chains of heterotypic 'Lys-63'-/'Lys-48'-linked branched ubiquitin chains. Regulates the IL1-mediated translocation of NCOR1 out of the nucleus. Involved in heart development. This chain is TGF-beta-activated kinase 1 and MAP3K7-binding protein 2, found in Homo sapiens (Human).